The following is a 138-amino-acid chain: ATP synthase epsilon chain (138 aa).

Belongs to the ATPase epsilon chain family. As to quaternary structure, F-type ATPases have 2 components, CF(1) - the catalytic core - and CF(0) - the membrane proton channel. CF(1) has five subunits: alpha(3), beta(3), gamma(1), delta(1), epsilon(1). CF(0) has three main subunits: a, b and c.

The protein localises to the cell inner membrane. Produces ATP from ADP in the presence of a proton gradient across the membrane. This is ATP synthase epsilon chain from Citrifermentans bemidjiense (strain ATCC BAA-1014 / DSM 16622 / JCM 12645 / Bem) (Geobacter bemidjiensis).